The sequence spans 127 residues: Mediator of RNA polymerase II transcription subunit 31 (127 aa).

The protein belongs to the Mediator complex subunit 31 family. In terms of assembly, component of the Mediator complex, which is composed of at least 21 subunits that form three structurally distinct submodules. The Mediator head module contains MED6, MED8, MED11, SRB4/MED17, SRB5/MED18, ROX3/MED19, SRB2/MED20 and SRB6/MED22, the middle module contains MED1, MED4, NUT1/MED5, MED7, CSE2/MED9, NUT2/MED10, SRB7/MED21 and SOH1/MED31, and the tail module contains MED2, PGD1/MED3, RGR1/MED14, GAL11/MED15 and SIN4/MED16. The head and the middle modules interact directly with RNA polymerase II, whereas the elongated tail module interacts with gene-specific regulatory proteins.

The protein resides in the nucleus. In terms of biological role, component of the Mediator complex, a coactivator involved in the regulated transcription of nearly all RNA polymerase II-dependent genes. Mediator functions as a bridge to convey information from gene-specific regulatory proteins to the basal RNA polymerase II transcription machinery. The Mediator complex, having a compact conformation in its free form, is recruited to promoters by direct interactions with regulatory proteins and serves for the assembly of a functional preinitiation complex with RNA polymerase II and the general transcription factors. The Mediator complex unfolds to an extended conformation and partially surrounds RNA polymerase II, specifically interacting with the unphosphorylated form of the C-terminal domain (CTD) of RNA polymerase II. The Mediator complex dissociates from the RNA polymerase II holoenzyme and stays at the promoter when transcriptional elongation begins. In Saccharomyces cerevisiae (strain ATCC 204508 / S288c) (Baker's yeast), this protein is Mediator of RNA polymerase II transcription subunit 31 (SOH1).